Consider the following 337-residue polypeptide: Glyceraldehyde-3-phosphate dehydrogenase, cytosolic (337 aa).

Residues Arg13 to Ile14, Asp35, and Arg82 contribute to the NAD(+) site. D-glyceraldehyde 3-phosphate contacts are provided by residues Ser153 to Thr155, Thr184, Thr213 to Gly214, and Arg236. Catalysis depends on Cys154, which acts as the Nucleophile. Asn318 provides a ligand contact to NAD(+).

Belongs to the glyceraldehyde-3-phosphate dehydrogenase family. Homotetramer.

The protein resides in the cytoplasm. The enzyme catalyses D-glyceraldehyde 3-phosphate + phosphate + NAD(+) = (2R)-3-phospho-glyceroyl phosphate + NADH + H(+). Its pathway is carbohydrate degradation; glycolysis; pyruvate from D-glyceraldehyde 3-phosphate: step 1/5. Its function is as follows. Key enzyme in glycolysis that catalyzes the first step of the pathway by converting D-glyceraldehyde 3-phosphate (G3P) into 3-phospho-D-glyceroyl phosphate. Essential for the maintenance of cellular ATP levels and carbohydrate metabolism. This is Glyceraldehyde-3-phosphate dehydrogenase, cytosolic (GAPC) from Craterostigma plantagineum (Blue gem).